The sequence spans 164 residues: Thiol peroxidase (164 aa).

The Thioredoxin domain occupies 18–163 (VKTGETAPEF…FESALEAYRN (146 aa)). Cys60 functions as the Cysteine sulfenic acid (-SOH) intermediate in the catalytic mechanism. The cysteines at positions 60 and 93 are disulfide-linked.

It belongs to the peroxiredoxin family. Tpx subfamily. As to quaternary structure, homodimer.

The enzyme catalyses a hydroperoxide + [thioredoxin]-dithiol = an alcohol + [thioredoxin]-disulfide + H2O. Thiol-specific peroxidase that catalyzes the reduction of hydrogen peroxide and organic hydroperoxides to water and alcohols, respectively. Plays a role in cell protection against oxidative stress by detoxifying peroxides. The protein is Thiol peroxidase of Staphylococcus saprophyticus subsp. saprophyticus (strain ATCC 15305 / DSM 20229 / NCIMB 8711 / NCTC 7292 / S-41).